An 81-amino-acid chain; its full sequence is Acyl carrier protein (81 aa).

Positions 2-80 (ASKDEILAGL…DAVNFIDNAQ (79 aa)) constitute a Carrier domain. Serine 40 carries the post-translational modification O-(pantetheine 4'-phosphoryl)serine.

The protein belongs to the acyl carrier protein (ACP) family. 4'-phosphopantetheine is transferred from CoA to a specific serine of apo-ACP by AcpS. This modification is essential for activity because fatty acids are bound in thioester linkage to the sulfhydryl of the prosthetic group.

It is found in the cytoplasm. Its pathway is lipid metabolism; fatty acid biosynthesis. Its function is as follows. Carrier of the growing fatty acid chain in fatty acid biosynthesis. The polypeptide is Acyl carrier protein (Kocuria rhizophila (strain ATCC 9341 / DSM 348 / NBRC 103217 / DC2201)).